A 627-amino-acid chain; its full sequence is UvrABC system protein C (627 aa).

One can recognise a GIY-YIG domain in the interval 26 to 105; that stretch reads PEPGVYFMRD…IKQHQPYFNV (80 aa). The region spanning 215 to 250 is the UVR domain; sequence QELIDILSEQMEKAAEALNFEVAARIRDQIAGLKSL.

The protein belongs to the UvrC family. In terms of assembly, interacts with UvrB in an incision complex.

The protein resides in the cytoplasm. Functionally, the UvrABC repair system catalyzes the recognition and processing of DNA lesions. UvrC both incises the 5' and 3' sides of the lesion. The N-terminal half is responsible for the 3' incision and the C-terminal half is responsible for the 5' incision. The polypeptide is UvrABC system protein C (Trichormus variabilis (strain ATCC 29413 / PCC 7937) (Anabaena variabilis)).